Here is a 267-residue protein sequence, read N- to C-terminus: Lyso-ornithine lipid O-acyltransferase (267 aa).

The helical transmembrane segment at 7–27 (IFLVVAAMVALSLSLIPFQYL) threads the bilayer.

Belongs to the 1-acyl-sn-glycerol-3-phosphate acyltransferase family. OlsA subfamily.

The protein resides in the membrane. It carries out the reaction a lyso-ornithine lipid + a fatty acyl-[ACP] = an N(2)-[(3R)-3-(acyloxy)acyl]-L-ornithine lipid + holo-[ACP]. It functions in the pathway lipid metabolism. Functionally, catalyzes the second step in the formation of ornithine lipids, which are phosphorus-free membrane lipids. Uses acyl-acyl carrier protein (acyl-AcpP) as an acyl donor and converts lyso-ornithine lipid (LOL) into ornithine lipid (OL). The protein is Lyso-ornithine lipid O-acyltransferase of Brucella abortus (strain 2308).